The primary structure comprises 153 residues: Pheromone-binding protein Gp-9 (153 aa).

A signal peptide spans 1–19 (MKTFVLHIFIFALVAFASA). Cystine bridges form between cysteine 37/cysteine 77, cysteine 73/cysteine 129, and cysteine 118/cysteine 138.

This sequence belongs to the PBP/GOBP family. As to quaternary structure, homodimer.

It is found in the secreted. Its function is as follows. Colony queen number, a major feature of social organization, is associated with worker genotype for Gp-9. Colonies are headed by either a single reproductive queen (monogyne form) or multiple queens (polygyne form). Differences in worker Gp-9 genotypes between social forms may cause differences in workers' abilities to recognize queens and regulate their numbers. This chain is Pheromone-binding protein Gp-9, found in Solenopsis daguerrei (Workerless parasitic ant).